Consider the following 908-residue polypeptide: MGVNDLWQILEPVKQHIHLQDLSGKTIAVDLSLWVCEAQTVKKMIGTVKKPHLRNLFFRISYLTQMNVKLVFVMEGEPPMLKADVISKRTQTRYGPSGKSRSQKTGRSHFKSVLRECLEMLECLGMPWVQAAGEAEAMCAYLNASGHVDGCLTNDGDAFLYGAQTVYRNFTMNTKDPHVDCYTISSIKSKLGLDRDALVGLAVLLGCDYLPKGVPGVGKEQALKLLQIFKGQSLLQRFNQWIEDPCYSVPQSAPKKVVHCSVCSHPGSPKDHERNGCILCKSDKYCEPHDYDYLCPCEWHQTDHNRHLSEIENNIKKKACSCEGFPFHEVIQEFLLNKNKMLKPITYQRPDLLLFQRFTVQKMEWPSHYACEKLLVLLTRYDMIERKHGRKTSNQLQPIRIVKPRVRNGVHCLEIEWEKPEHYVVEDGDPGKLSLLTMEEASLFEAAYPDAVAVYQKQLSETKGRKQKSMKNKPKGSHLPEADDVINSQSLMTLKPTSKAFPKQNPKINLENSPDPILAQESTSPSLNSFVSPENAPCLNLQEQLVPSPRTLAIKQSKDVSHFLVSECSQPSSSSHDISVITDLQLSTIDWAGTSFSNSPAVQRNTFSQDLASESESSAILPDFEQLSYESEQGTSDSEGSGRDLQQSNPEEQLLSGISALHLHDLPLKERIRIKSSCPQYNVGADAGLESLPLKLKGSCIAYSSSDGSSNFSKDLTGVYLHKESRNSKVLDSRLQENCGANTSLPYSFSDKAVKTSSLQVGLPTAAIPHNPRVAVKTTKNLVMKNSVCLERDSSDEDNAPGSWKSKYTAPEMKHSSQKHSLVHVRDSTHNKLRNPKVESKETKLCNESFKTAEDEENGFSDLGRSPQSFRPCHDKDENSTASWENPLPLRQRLKLRFQNTQSGFYNT.

Positions 2-96 (GVNDLWQILE…SKRTQTRYGP (95 aa)) are XPG-N domain. Asp-30, Glu-75, Glu-134, Glu-136, Asp-155, Asp-157, and Asp-208 together coordinate Mg(2+). The XPG-I domain stretch occupies residues 122–208 (ECLGMPWVQA…VGLAVLLGCD (87 aa)). The 5'-3' exonuclease domain stretch occupies residues 208 to 383 (DYLPKGVPGV…LLVLLTRYDM (176 aa)). Residues 389–463 (GRKTSNQLQP…VYQKQLSETK (75 aa)) are chromodomain. Disordered regions lie at residues 460–482 (SETK…LPEA), 629–650 (YESE…QSNP), 792–834 (RDSS…NKLR), and 853–886 (AEDE…SWEN). Positions 465-476 (RKQKSMKNKPKG) are enriched in basic residues. Ser-794 and Ser-795 each carry phosphoserine. Residues 824 to 834 (HVRDSTHNKLR) are compositionally biased toward basic and acidic residues.

It belongs to the XPG/RAD2 endonuclease family. GEN subfamily. As to quaternary structure, largely monomeric, dimerizes on the Holliday junction and the first nick occurs upon dimerization at the junction. It depends on Mg(2+) as a cofactor. In terms of tissue distribution, expressed in bone marrow and testis and to a lesser extent in thymus, spleen, brain and colon.

It is found in the nucleus. In terms of biological role, endonuclease which resolves Holliday junctions (HJs) by the introduction of symmetrically related cuts across the junction point, to produce nicked duplex products in which the nicks can be readily ligated. Four-way DNA intermediates, also known as Holliday junctions, are formed during homologous recombination and DNA repair, and their resolution is necessary for proper chromosome segregation. Cleaves HJs by a nick and counter-nick mechanism involving dual coordinated incisions that lead to the formation of ligatable nicked duplex products. Cleavage of the first strand is rate limiting, while second strand cleavage is rapid. Largely monomeric, dimerizes on the HJ and the first nick occurs upon dimerization at the junction. Efficiently cleaves both single and double HJs contained within large recombination intermediates. Exhibits a weak sequence preference for incision between two G residues that reside in a T-rich region of DNA. Also has endonuclease activity on 5'-flap and replication fork (RF) DNA substrates. This Mus musculus (Mouse) protein is Flap endonuclease GEN homolog 1 (Gen1).